The following is a 325-amino-acid chain: Collagen alpha-1(IX) chain (325 aa).

Residues 1-54 (PGQLGNSGKPGQQGPPGEVGPRGPRGLPGSRGPVGPEGSPGIPGKLGPLGSPGL) are compositionally biased toward low complexity. Disordered stretches follow at residues 1 to 163 (PGQL…APTD) and 187 to 325 (RPDT…GPDK). Over residues 198–208 (RPGPPGPPGPP) the composition is skewed to pro residues. Positions 237–249 (PKGDLGEKGERGP) are enriched in basic and acidic residues. A compositionally biased stretch (pro residues) spans 292–304 (VPGPPGPPGPPGF).

This sequence belongs to the fibril-associated collagens with interrupted helices (FACIT) family. In terms of assembly, heterotrimer of an alpha 1(IX), an alpha 2(IX) and an alpha 3(IX) chain. Covalently linked to the telopeptides of type II collagen by lysine-derived cross-links. Post-translationally, prolines at the third position of the tripeptide repeating unit (G-X-Y) are hydroxylated in some or all of the chains.

It is found in the secreted. It localises to the extracellular space. The protein resides in the extracellular matrix. Functionally, structural component of hyaline cartilage and vitreous of the eye. This chain is Collagen alpha-1(IX) chain (Col9a1), found in Rattus norvegicus (Rat).